A 535-amino-acid chain; its full sequence is T-complex protein 1 subunit beta (535 aa).

At alanine 2 the chain carries N-acetylalanine. Phosphoserine is present on serine 3. Lysine 13 carries the post-translational modification N6-acetyllysine. Residue glycine 44 coordinates ADP. Glycine 44 provides a ligand contact to ATP. Serine 60 is modified (phosphoserine). Aspartate 97 lines the Mg(2+) pocket. Glycine 98, threonine 99, threonine 100, and serine 101 together coordinate ADP. ATP-binding residues include glycine 98, threonine 99, and threonine 100. Lysine 154 is modified (N6-acetyllysine). 2 residues coordinate ADP: serine 168 and serine 169. Residue lysine 181 is modified to N6-acetyllysine. A Glycyl lysine isopeptide (Lys-Gly) (interchain with G-Cter in SUMO2) cross-link involves residue lysine 248. Serine 260 carries the phosphoserine modification. Threonine 261 is modified (phosphothreonine). ADP-binding residues include glycine 410, glutamate 495, and lysine 500. ATP-binding residues include glutamate 495 and lysine 500.

This sequence belongs to the TCP-1 chaperonin family. Component of the chaperonin-containing T-complex (TRiC), a hexadecamer composed of two identical back-to-back stacked rings enclosing a protein folding chamber. Each ring is made up of eight different subunits: TCP1/CCT1, CCT2, CCT3, CCT4, CCT5, CCT6A/CCT6, CCT7, CCT8. Interacts with PACRG. Interacts with FLCN. Interacts with DLEC1. Interacts with SVEP1.

It localises to the cytoplasm. It catalyses the reaction ATP + H2O = ADP + phosphate + H(+). Its function is as follows. Component of the chaperonin-containing T-complex (TRiC), a molecular chaperone complex that assists the folding of actin, tubulin and other proteins upon ATP hydrolysis. The TRiC complex mediates the folding of WRAP53/TCAB1, thereby regulating telomere maintenance. As part of the TRiC complex may play a role in the assembly of BBSome, a complex involved in ciliogenesis regulating transports vesicles to the cilia. This Bos taurus (Bovine) protein is T-complex protein 1 subunit beta (CCT2).